A 208-amino-acid polypeptide reads, in one-letter code: Major capsid protein (208 aa).

Positions 1–16 (MSTVVVKGNVNGGVQQ) are enriched in low complexity. The disordered stretch occupies residues 1–69 (MSTVVVKGNV…TGVPRGRGSS (69 aa)). Basic residues-rich tracts occupy residues 17–30 (PRRRRRQSLRRRAN) and 44–61 (PRRRRRRRGGNRRSRRTG).

This sequence belongs to the luteoviruses capsid protein family.

It is found in the virion. In terms of biological role, major capsid protein that self-assembles to form an icosahedral capsid with a T=3 symmetry, about 23 nm in diameter, and consisting of 180 capsid proteins monomers. Most of the 180 monomers are the major capsid protein, but a small percentage contain the minor capsid protein, which has a long C-terminal extension. The polypeptide is Major capsid protein (Solanum tuberosum (Potato)).